The sequence spans 823 residues: Tax1-binding protein 1 homolog B (823 aa).

Residues 149-487 (VTTKASYLEQ…QKQVVKFNEQ (339 aa)) are a coiled coil. 2 disordered regions span residues 342 to 377 (HRQLLANSSPSGESKALREQLRQKEEQLQATQQQAN) and 486 to 519 (EQQGVKRSPGSDAAAGPLSASPEASAPGSPSTSD). A compositionally biased stretch (basic and acidic residues) spans 356–368 (KALREQLRQKEEQ). Positions 498–518 (AAAGPLSASPEASAPGSPSTS) are enriched in low complexity. Residues 548–638 (QMLNEERERC…NREEEQKDSN (91 aa)) are a coiled coil. The interval 650-746 (MPYAQDDPSP…EPAAPEPAEF (97 aa)) is disordered. Residues 723–739 (LEEPEEPQSTQNDDEPA) show a composition bias toward acidic residues. 2 consecutive UBZ1-type zinc fingers follow at residues 762–788 (QKRCPLCEVIFPPHYDQSKFEEHVESH) and 789–815 (WKICPMCSEQFPLDCDQQLFEKHVLTH). Residues C765, C768, H784, H788, C792, C795, H811, and H815 each coordinate Zn(2+).

In terms of tissue distribution, expressed at relatively high levels in both proximal and distal regions of the fin bud during pectoral fin development.

In terms of biological role, may have anti-apoptotic activity. The sequence is that of Tax1-binding protein 1 homolog B (tax1bp1b) from Danio rerio (Zebrafish).